The sequence spans 82 residues: Small ribosomal subunit protein bS16 (82 aa).

Belongs to the bacterial ribosomal protein bS16 family.

The sequence is that of Small ribosomal subunit protein bS16 from Francisella tularensis subsp. holarctica (strain FTNF002-00 / FTA).